A 452-amino-acid chain; its full sequence is Phosphoglucosamine mutase (452 aa).

Serine 108 serves as the catalytic Phosphoserine intermediate. Serine 108, aspartate 247, aspartate 249, and aspartate 251 together coordinate Mg(2+). Serine 108 carries the post-translational modification Phosphoserine.

This sequence belongs to the phosphohexose mutase family. It depends on Mg(2+) as a cofactor. Post-translationally, activated by phosphorylation.

The catalysed reaction is alpha-D-glucosamine 1-phosphate = D-glucosamine 6-phosphate. Functionally, catalyzes the conversion of glucosamine-6-phosphate to glucosamine-1-phosphate. In Burkholderia mallei (strain NCTC 10247), this protein is Phosphoglucosamine mutase.